The chain runs to 310 residues: p-hydroxybenzoic acid efflux pump subunit AaeA (310 aa).

A helical transmembrane segment spans residues 12 to 32 (AITLVLVILAFIAIFRAWVYY).

Belongs to the membrane fusion protein (MFP) (TC 8.A.1) family.

The protein localises to the cell inner membrane. Forms an efflux pump with AaeB. The polypeptide is p-hydroxybenzoic acid efflux pump subunit AaeA (Salmonella heidelberg (strain SL476)).